Here is a 201-residue protein sequence, read N- to C-terminus: ATP synthase subunit b 2 (201 aa).

Positions 1–17 are enriched in polar residues; the sequence is MAEQKNPLTTPSPNADT. The tract at residues 1–39 is disordered; sequence MAEQKNPLTTPSPNADTTIVPAGSPHTHTEQPSGGHGGA. A helical membrane pass occupies residues 47 to 66; that stretch reads TFLSQLIWLALAFGLLYYLM.

It belongs to the ATPase B chain family. As to quaternary structure, F-type ATPases have 2 components, F(1) - the catalytic core - and F(0) - the membrane proton channel. F(1) has five subunits: alpha(3), beta(3), gamma(1), delta(1), epsilon(1). F(0) has three main subunits: a(1), b(2) and c(10-14). The alpha and beta chains form an alternating ring which encloses part of the gamma chain. F(1) is attached to F(0) by a central stalk formed by the gamma and epsilon chains, while a peripheral stalk is formed by the delta and b chains.

The protein resides in the cell inner membrane. F(1)F(0) ATP synthase produces ATP from ADP in the presence of a proton or sodium gradient. F-type ATPases consist of two structural domains, F(1) containing the extramembraneous catalytic core and F(0) containing the membrane proton channel, linked together by a central stalk and a peripheral stalk. During catalysis, ATP synthesis in the catalytic domain of F(1) is coupled via a rotary mechanism of the central stalk subunits to proton translocation. In terms of biological role, component of the F(0) channel, it forms part of the peripheral stalk, linking F(1) to F(0). The b'-subunit is a diverged and duplicated form of b found in plants and photosynthetic bacteria. In Methylorubrum extorquens (strain PA1) (Methylobacterium extorquens), this protein is ATP synthase subunit b 2 (atpF2).